Here is a 117-residue protein sequence, read N- to C-terminus: MSRRNKNGPKLELRLNLSPPPSQASQMSLVRSPNRSNTTSPSSCVSSETNQEENETITSMVLVGCPRCLMYVMLSDDDPKCPKCKSTVLLDFLQENAFAATTATAANTRRKKKTWWN.

Residues 1 to 56 (MSRRNKNGPKLELRLNLSPPPSQASQMSLVRSPNRSNTTSPSSCVSSETNQEENET) form a disordered region. The EAR motif lies at 10 to 15 (KLELRL). Over residues 31 to 49 (RSPNRSNTTSPSSCVSSET) the composition is skewed to low complexity.

Interacts with GL2. Interacts with TPL.

It is found in the nucleus. In terms of biological role, acts as a negative regulator of root hair development redundantly with GIR1. GIR1 and GIR2 may function as adapter proteins that associate with GL2 and participate in the control of root hair formation. GIR1 and GIR2 may function as adapter proteins that associate with TPL and participate in the repression of root gene expression. The protein is Protein GL2-INTERACTING REPRESSOR 2 of Arabidopsis thaliana (Mouse-ear cress).